The following is a 305-amino-acid chain: Glycine--tRNA ligase alpha subunit (305 aa).

The protein belongs to the class-II aminoacyl-tRNA synthetase family. Tetramer of two alpha and two beta subunits.

Its subcellular location is the cytoplasm. The enzyme catalyses tRNA(Gly) + glycine + ATP = glycyl-tRNA(Gly) + AMP + diphosphate. This Streptococcus pneumoniae (strain ATCC BAA-255 / R6) protein is Glycine--tRNA ligase alpha subunit.